A 603-amino-acid chain; its full sequence is Flavin-dependent halogenase chlA (603 aa).

Residues Gly16, Ala19, and Glu59 each coordinate FAD. 2 residues coordinate chloride: Thr352 and Gly353.

This sequence belongs to the flavin-dependent halogenase family.

The catalysed reaction is 2,4,6-trihydroxyphenylhexan-1-one + FADH2 + chloride + O2 = (3-chloro-2,4,6-trihydroxyphenyl)hexan-1-one + FAD + 2 H2O + H(+). The enzyme catalyses (3-chloro-2,4,6-trihydroxyphenyl)hexan-1-one + FADH2 + chloride + O2 = (3,5-dichloro-2,4,6-trihydroxyphenyl)hexan-1-one + FAD + 2 H2O. In terms of biological role, flavin-dependent halogenase; part of the gene cluster that mediates the biosynthesis of DIF-1 (Differentiation Inducing Factor-1), a signal molecule involved in the differentiation of pstO (prestalk-O) cells. The three-step process begins with the formation of (2,4,6-trihydroxyphenyl)-1-hexan-1-one (THPH) by the polyketide synthase StlB. THPH is then dichlorinated by the flavin-dependent halogenase ChlA. The last step of DIF-1 biosynthesis is the O-methylation of dichloro-THPH (or des-methyl-DIF-1) by the methyltransferase DmtA to yield DIF-1. This is Flavin-dependent halogenase chlA from Dictyostelium discoideum (Social amoeba).